A 436-amino-acid chain; its full sequence is GTPase Der (436 aa).

EngA-type G domains follow at residues 4–167 (PVVA…PEVE) and 174–350 (VRVA…EQRT). GTP is bound by residues 10–17 (GRPNVGKS), 57–61 (DTGGL), 120–123 (NKVD), 180–187 (GRPNVGKS), 227–231 (DTAGL), and 292–295 (NKWD). One can recognise a KH-like domain in the interval 351 to 435 (RRISTSEVND…PLRIILRRKN (85 aa)).

This sequence belongs to the TRAFAC class TrmE-Era-EngA-EngB-Septin-like GTPase superfamily. EngA (Der) GTPase family. In terms of assembly, associates with the 50S ribosomal subunit.

Functionally, GTPase that plays an essential role in the late steps of ribosome biogenesis. The chain is GTPase Der from Gemmatimonas aurantiaca (strain DSM 14586 / JCM 11422 / NBRC 100505 / T-27).